Consider the following 430-residue polypeptide: Aspartate--tRNA(Asp/Asn) ligase (430 aa).

Glutamate 168 contributes to the L-aspartate binding site. The interval 190–193 (QLYK) is aspartate. Arginine 212 contacts L-aspartate. Residues 212 to 214 (RAE), 220 to 222 (RHL), and glutamate 353 contribute to the ATP site. Mg(2+) is bound by residues glutamate 353 and serine 356. Serine 356 and arginine 360 together coordinate L-aspartate. Position 401-404 (401-404 (GAER)) interacts with ATP.

Belongs to the class-II aminoacyl-tRNA synthetase family. Type 2 subfamily. As to quaternary structure, homodimer. Mg(2+) serves as cofactor.

It localises to the cytoplasm. It catalyses the reaction tRNA(Asx) + L-aspartate + ATP = L-aspartyl-tRNA(Asx) + AMP + diphosphate. Its function is as follows. Aspartyl-tRNA synthetase with relaxed tRNA specificity since it is able to aspartylate not only its cognate tRNA(Asp) but also tRNA(Asn). Reaction proceeds in two steps: L-aspartate is first activated by ATP to form Asp-AMP and then transferred to the acceptor end of tRNA(Asp/Asn). This Archaeoglobus fulgidus (strain ATCC 49558 / DSM 4304 / JCM 9628 / NBRC 100126 / VC-16) protein is Aspartate--tRNA(Asp/Asn) ligase.